Reading from the N-terminus, the 429-residue chain is Protein FAM98B (429 aa).

The interval 304-429 (RVPDRGGRPN…GGGGGGYRRY (126 aa)) is disordered. Basic and acidic residues predominate over residues 305–314 (VPDRGGRPNE). Gly residues predominate over residues 332-429 (GGRGGWGGGG…GGGGGGYRRY (98 aa)).

The protein belongs to the FAM98 family. Homodimer. Component of a tRNA-splicing ligase complex. Interacts with FAM98A.

It localises to the nucleus. The protein resides in the cytoplasm. Positively stimulates PRMT1-induced protein arginine dimethylated arginine methylation. This is Protein FAM98B (Fam98b) from Mus musculus (Mouse).